A 481-amino-acid chain; its full sequence is Proline--tRNA ligase (481 aa).

Belongs to the class-II aminoacyl-tRNA synthetase family. ProS type 3 subfamily. As to quaternary structure, homodimer.

The protein resides in the cytoplasm. It catalyses the reaction tRNA(Pro) + L-proline + ATP = L-prolyl-tRNA(Pro) + AMP + diphosphate. Catalyzes the attachment of proline to tRNA(Pro) in a two-step reaction: proline is first activated by ATP to form Pro-AMP and then transferred to the acceptor end of tRNA(Pro). The sequence is that of Proline--tRNA ligase from Chlorobium phaeobacteroides (strain BS1).